The chain runs to 156 residues: Deoxyuridine 5'-triphosphate nucleotidohydrolase (156 aa).

Substrate-binding positions include 76–78, Asn-89, 93–95, and Lys-103; these read RSG and TVD.

This sequence belongs to the dUTPase family. Mg(2+) serves as cofactor.

The enzyme catalyses dUTP + H2O = dUMP + diphosphate + H(+). It participates in pyrimidine metabolism; dUMP biosynthesis; dUMP from dCTP (dUTP route): step 2/2. Functionally, this enzyme is involved in nucleotide metabolism: it produces dUMP, the immediate precursor of thymidine nucleotides and it decreases the intracellular concentration of dUTP so that uracil cannot be incorporated into DNA. The chain is Deoxyuridine 5'-triphosphate nucleotidohydrolase from Rhizobium rhizogenes (strain K84 / ATCC BAA-868) (Agrobacterium radiobacter).